We begin with the raw amino-acid sequence, 376 residues long: 3-dehydroquinate synthase (376 aa).

NAD(+) is bound by residues 115–119, 139–140, Lys-152, and Lys-161; these read GVIGD and TS. Zn(2+)-binding residues include Glu-194, His-256, and His-275.

It belongs to the sugar phosphate cyclases superfamily. Dehydroquinate synthase family. Co(2+) is required as a cofactor. It depends on Zn(2+) as a cofactor. The cofactor is NAD(+).

Its subcellular location is the cytoplasm. It carries out the reaction 7-phospho-2-dehydro-3-deoxy-D-arabino-heptonate = 3-dehydroquinate + phosphate. It functions in the pathway metabolic intermediate biosynthesis; chorismate biosynthesis; chorismate from D-erythrose 4-phosphate and phosphoenolpyruvate: step 2/7. Its function is as follows. Catalyzes the conversion of 3-deoxy-D-arabino-heptulosonate 7-phosphate (DAHP) to dehydroquinate (DHQ). This is 3-dehydroquinate synthase from Rhizobium leguminosarum bv. trifolii (strain WSM2304).